Here is an 801-residue protein sequence, read N- to C-terminus: Phenylalanine--tRNA ligase beta subunit (801 aa).

Positions G39–F147 constitute a tRNA-binding domain. The B5 domain occupies V401–T477. The Mg(2+) site is built by D455, D461, E464, and E465. The FDX-ACB domain occupies S708 to R801.

The protein belongs to the phenylalanyl-tRNA synthetase beta subunit family. Type 1 subfamily. As to quaternary structure, tetramer of two alpha and two beta subunits. The cofactor is Mg(2+).

Its subcellular location is the cytoplasm. It carries out the reaction tRNA(Phe) + L-phenylalanine + ATP = L-phenylalanyl-tRNA(Phe) + AMP + diphosphate + H(+). The protein is Phenylalanine--tRNA ligase beta subunit of Geobacter sulfurreducens (strain ATCC 51573 / DSM 12127 / PCA).